Reading from the N-terminus, the 170-residue chain is uncharacterized protein (170 aa).

The N-terminal stretch at 1-28 (MTGGVMSQKFVVGAGLLVCSVCSLSAMA) is a signal peptide.

This sequence belongs to the fimbrial protein family.

Part of the yfcOPQRSUV fimbrial operon. Could contribute to adhesion to various surfaces in specific environmental niches. Increases adhesion to eukaryotic T24 bladder epithelial cells in the absence of fim genes. This is an uncharacterized protein from Escherichia coli (strain K12).